A 110-amino-acid polypeptide reads, in one-letter code: Late cornified envelope protein 1A (110 aa).

The span at 1–10 shows a compositional bias: low complexity; sequence MSCQQSQQQC. Disordered regions lie at residues 1 to 23 and 83 to 110; these read MSCQ…CPPK and QSSG…GGCC. Pro residues predominate over residues 11–23; sequence QPPPKCTPKCPPK. The segment covering 83-95 has biased composition (low complexity); sequence QSSGCCSQPSGGS. Residues 96–110 are compositionally biased toward gly residues; it reads SCCGGDSGQHSGGCC.

Belongs to the LCE family. In terms of assembly, interacts with CYSRT1. Skin-specific. Expression was readily detected in adult trunk skin, adult arm skin, fetal skin, penal skin, vulva, esophagus and tongue. Not expressed in the cervix, rectum, lung, colon, or placenta.

Its function is as follows. Precursors of the cornified envelope of the stratum corneum. The chain is Late cornified envelope protein 1A (LCE1A) from Homo sapiens (Human).